We begin with the raw amino-acid sequence, 124 residues long: Fluoride-specific ion channel FluC (124 aa).

The next 4 helical transmembrane spans lie at 3-23, 34-54, 68-88, and 100-120; these read VLLI…VSNL, IGTL…FIFI, LLLI…IETF, and ALNV…GVLI. Na(+) is bound by residues G75 and T78.

It belongs to the fluoride channel Fluc/FEX (TC 1.A.43) family.

Its subcellular location is the cell inner membrane. The catalysed reaction is fluoride(in) = fluoride(out). Its activity is regulated as follows. Na(+) is not transported, but it plays an essential structural role and its presence is essential for fluoride channel function. Fluoride-specific ion channel. Important for reducing fluoride concentration in the cell, thus reducing its toxicity. This is Fluoride-specific ion channel FluC from Coxiella burnetii (strain Dugway 5J108-111).